The following is a 182-amino-acid chain: Ribosome maturation factor RimP (182 aa).

Belongs to the RimP family.

It localises to the cytoplasm. Its function is as follows. Required for maturation of 30S ribosomal subunits. The protein is Ribosome maturation factor RimP of Corynebacterium efficiens (strain DSM 44549 / YS-314 / AJ 12310 / JCM 11189 / NBRC 100395).